A 730-amino-acid polypeptide reads, in one-letter code: MWVTRLLPVLLLQHVLLHLLLLPIAIPYAEGQKKRRNTLHEFKRSAKTTLIKEDPLLKIKTKKMNTADQCANRCIRNKGLPFTCKAFVFDKARKRCLWFPFNSMSSGVKKEFGHEFDLYENKDYIRNCIIGKGGSYKGTVSITKSGIKCQPWNSMIPHEHSFLPSSYRGKDLQENYCRNPRGEEGGPWCFTSNPEVRYEVCDIPQCSEVECMTCNGESYRGPMDHTETGKICQRWDHQTPHRHKFLPERYPDKGFDDNYCRNPDGKPRPWCYTLDPDTPWEYCAIKMCAHSTMNDTDLPMQTTECIQGQGEGYRGTINTIWNGIPCQRWDSQYPHQHDITPENFKCKDLRENYCRNPDGAESPWCFTTDPNIRVGYCSQIPKCDVSSGQDCYRGNGKNYMGSLSKTRSGLTCSMWDKNMEDLHRHIFWEPDATKLNKNYCRNPDDDAHGPWCYTGNPLIPWDYCPISRCEGDTTPTIVNLDHPVISCAKTKQLRVVNGIPTRTNVGWMVSLKYRNKHICGGSLIKESWILTARQCFPSRNKDLKDYEAWLGIHDVHGRGDEKRKQVLNVTQLVYGPEGSDLVLLKLARPAILDDFVSTIDLPNYGCTIPEKTTCSVYGWGYTGLINSDGLLRVAHLYIMGNEKCSQYHQGKVTLNESEICAGAENIVSGPCEGDYGGPLVCEQHKMRMVLGVIVPGRGCAIPNRPGIFVRVAYYAKWIHKIILTYKAPQL.

Positions 1-31 (MWVTRLLPVLLLQHVLLHLLLLPIAIPYAEG) are cleaved as a signal peptide. Q32 is modified (pyrrolidone carboxylic acid). The region spanning 37–123 (NTLHEFKRSA…HEFDLYENKD (87 aa)) is the PAN domain. Cystine bridges form between C70-C96, C74-C84, C128-C206, C149-C189, C177-C201, C211-C288, C232-C271, and C260-C283. Kringle domains lie at 128-206 (CIIG…IPQC) and 211-288 (CMTC…IKMC). A glycan (N-linked (GlcNAc...) asparagine) is linked at N294. Disulfide bonds link C305–C383, C326–C365, C354–C377, C391–C469, C412–C452, C440–C464, C487–C606, C519–C535, C614–C681, C644–C660, and C671–C699. 2 Kringle domains span residues 305-383 (CIQG…IPKC) and 391-469 (CYRG…ISRC). Residues 495–723 (VVNGIPTRTN…YAKWIHKIIL (229 aa)) form the Peptidase S1 domain. Residues N568 and N655 are each glycosylated (N-linked (GlcNAc...) asparagine).

It belongs to the peptidase S1 family. Plasminogen subfamily. As to quaternary structure, dimer of an alpha chain and a beta chain linked by a disulfide bond. Interacts with SRPX2; the interaction increases HGF mitogenic activity. Post-translationally, the single-chain precursor undergoes proteolytic processing by TMPRSS13 resulting in an active two-chain form. The single-chain precursor undergoes proteolytic processing by HGFAC resulting in an active two-chain form.

Functionally, potent mitogen for mature parenchymal hepatocyte cells, seems to be a hepatotrophic factor, and acts as a growth factor for a broad spectrum of tissues and cell types. Activating ligand for the receptor tyrosine kinase MET by binding to it and promoting its dimerization. Activates MAPK signaling following TMPRSS13 cleavage and activation. This chain is Hepatocyte growth factor (HGF), found in Bos taurus (Bovine).